The sequence spans 515 residues: MAEQVALSRTQVCGILREELYQGDAFHQADTHIFIIMGASGDLAKKKIYPTIWWLFRDGLLPEDTFIVGYARSRLTVDDIRKQSEPFFKATPEERPKLEEFFARNSYVAGQYDDAASYKHLNSHMNALHQGMQANRLFYLALPPTVYEAVTKNIQETCMSQTGWNRIIVEKPFGRDLQSSNQLSNHISSLFREDQIYRIDHYLGKEMVQNLMVLRFANRIFGPIWNRDNIACVILTFKEPFGTEGRGGYFDEFGIIRDVMQNHLLQMLCLVAMEKPATTGSDDVRDEKVKVLKCISEVETDNVVLGQYVGNPNGEGEAANGYLDDPTVPHGSTTATFAAAVLYVENERWDGVPFILRCGKALNERKAEVRLQFRDVAGDIFHQQCKRNELVIRVQPNEAVYTKMMTKKPGMFFNPEESELDLTYGNRYKNVKLPDAYERLILDVFCGSQMHFVRSDELREAWRIFTPLLHKIDREKPQPIPYVYGSRGPTEADELMKRVGFQYEGTYKWVNPHKL.

The residue at position 2 (Ala-2) is an N-acetylalanine. NADP(+) contacts are provided by residues 38–45, Arg-72, Tyr-147, and Lys-171; that span reads GASGDLAK. Residues Lys-171, 201–205, Glu-239, and Asp-258 each bind D-glucose 6-phosphate; that span reads HYLGK. His-263 serves as the catalytic Proton acceptor. Residue Arg-357 participates in NADP(+) binding. Residues Lys-360 and Arg-365 each contribute to the D-glucose 6-phosphate site. NADP(+)-binding residues include Lys-366, Arg-370, and Arg-393. Gln-395 serves as a coordination point for D-glucose 6-phosphate. Residues 401 to 403, 421 to 423, Arg-487, and Tyr-503 each bind NADP(+); these read YTK and DLT. A Phosphotyrosine modification is found at Tyr-507. Trp-509 is an NADP(+) binding site.

It belongs to the glucose-6-phosphate dehydrogenase family. As to quaternary structure, homotetramer; dimer of dimers. Interacts with SIRT2; the interaction is enhanced by H(2)O(2) treatment. Forms a ternary complex with ALDOB and TP53; this interaction is direct. ALDOB stabilizes the complex inhibiting G6PD activity and keeping oxidative pentose phosphate metabolism in check. In terms of processing, acetylated by ELP3 at Lys-403; acetylation inhibits its homodimerization and enzyme activity. Deacetylated by SIRT2 at Lys-403; deacetylation stimulates its enzyme activity.

It is found in the cytoplasm. It localises to the cytosol. Its subcellular location is the membrane. It carries out the reaction D-glucose 6-phosphate + NADP(+) = 6-phospho-D-glucono-1,5-lactone + NADPH + H(+). The protein operates within carbohydrate degradation; pentose phosphate pathway; D-ribulose 5-phosphate from D-glucose 6-phosphate (oxidative stage): step 1/3. In terms of biological role, catalyzes the rate-limiting step of the oxidative pentose-phosphate pathway, which represents a route for the dissimilation of carbohydrates besides glycolysis. The main function of this enzyme is to provide reducing power (NADPH) and pentose phosphates for fatty acid and nucleic acid synthesis. The protein is Glucose-6-phosphate 1-dehydrogenase X (G6pdx) of Mus musculus (Mouse).